Reading from the N-terminus, the 342-residue chain is MVLLAIETSCDETAAAVVRDGRLVLSSVVSSQVAVHAEYGGVVPEIASRKHLEMITPVVRQALDEAGVSLAEIEGIAVTRGPGLLGALLVGVSMAKSLALACKIPLVGVHHIEGHLLAGFLEQPVAFPFLALVVSGGHTHLYRVDGIGRYRILGRTIDDAVGEAYDKTATLLGLGYPGGALIDRLAQQGSPTAVKFPRPLLHDKSLNFSFSGLKTAVLTHLKKQPHVPEGAELHDLCASFQAAVCEVLVKKTEAALKQEGLQRLVVGGGVACNSGLRHAMQQLATRLKIELQIPPPVLCGDNAAMLAVAGDAYLSAGCQDDLAMDATATWPLDQVARWEQLP.

Residues His-111 and His-115 each coordinate Fe cation. Substrate contacts are provided by residues 133 to 137 (VVSGG), Asp-166, Gly-179, Asp-183, and Asn-273. Asp-301 lines the Fe cation pocket.

It belongs to the KAE1 / TsaD family. Fe(2+) serves as cofactor.

It localises to the cytoplasm. It catalyses the reaction L-threonylcarbamoyladenylate + adenosine(37) in tRNA = N(6)-L-threonylcarbamoyladenosine(37) in tRNA + AMP + H(+). Required for the formation of a threonylcarbamoyl group on adenosine at position 37 (t(6)A37) in tRNAs that read codons beginning with adenine. Is involved in the transfer of the threonylcarbamoyl moiety of threonylcarbamoyl-AMP (TC-AMP) to the N6 group of A37, together with TsaE and TsaB. TsaD likely plays a direct catalytic role in this reaction. The sequence is that of tRNA N6-adenosine threonylcarbamoyltransferase from Trichlorobacter lovleyi (strain ATCC BAA-1151 / DSM 17278 / SZ) (Geobacter lovleyi).